Here is a 360-residue protein sequence, read N- to C-terminus: Peptide chain release factor 1 (360 aa).

N5-methylglutamine is present on Gln235. Positions 284-304 are disordered; it reads KVDSERSADRKSQVGSGDRSE.

The protein belongs to the prokaryotic/mitochondrial release factor family. Post-translationally, methylated by PrmC. Methylation increases the termination efficiency of RF1.

It localises to the cytoplasm. In terms of biological role, peptide chain release factor 1 directs the termination of translation in response to the peptide chain termination codons UAG and UAA. The polypeptide is Peptide chain release factor 1 (Agrobacterium fabrum (strain C58 / ATCC 33970) (Agrobacterium tumefaciens (strain C58))).